The chain runs to 66 residues: Large ribosomal subunit protein uL29 (66 aa).

It belongs to the universal ribosomal protein uL29 family.

The protein is Large ribosomal subunit protein uL29 of Brucella abortus (strain S19).